Reading from the N-terminus, the 159-residue chain is Small ribosomal subunit protein uS15 (159 aa).

Positions 1–16 (MNKRKEKGKSHSKRPV) are enriched in basic residues. Positions 1–22 (MNKRKEKGKSHSKRPVRNTPPR) are disordered.

It belongs to the universal ribosomal protein uS15 family. Part of the 30S ribosomal subunit.

This Ignicoccus hospitalis (strain KIN4/I / DSM 18386 / JCM 14125) protein is Small ribosomal subunit protein uS15.